A 1409-amino-acid chain; its full sequence is DNA-directed RNA polymerase subunit beta' (1409 aa).

Zn(2+)-binding residues include Cys70, Cys72, Cys85, and Cys88. Positions 461, 463, and 465 each coordinate Mg(2+). Residues Cys833, Cys907, Cys914, and Cys917 each coordinate Zn(2+). The segment at 1389–1409 (EPVAQAAESEDVPDVSQQEAA) is disordered.

The protein belongs to the RNA polymerase beta' chain family. As to quaternary structure, the RNAP catalytic core consists of 2 alpha, 1 beta, 1 beta' and 1 omega subunit. When a sigma factor is associated with the core the holoenzyme is formed, which can initiate transcription. The cofactor is Mg(2+). Zn(2+) serves as cofactor.

It catalyses the reaction RNA(n) + a ribonucleoside 5'-triphosphate = RNA(n+1) + diphosphate. DNA-dependent RNA polymerase catalyzes the transcription of DNA into RNA using the four ribonucleoside triphosphates as substrates. In Pelobacter propionicus (strain DSM 2379 / NBRC 103807 / OttBd1), this protein is DNA-directed RNA polymerase subunit beta'.